The chain runs to 928 residues: Envelope glycoprotein B (928 aa).

Low complexity predominate over residues Met-1 to Gly-12. Disordered regions lie at residues Met-1 to Arg-25 and Gly-67 to Asn-105. The N-terminal stretch at Met-1 to Ala-62 is a signal peptide. The Virion surface segment spans residues Ala-63–Pro-803. Residues Thr-71–Pro-95 show a composition bias toward pro residues. N-linked (GlcNAc...) asparagine; by host glycans are attached at residues Asn-105 and Asn-153. 5 disulfides stabilise this stretch: Cys-128–Cys-606, Cys-145–Cys-562, Cys-219–Cys-283, Cys-376–Cys-424, and Cys-627–Cys-662. 2 involved in fusion and/or binding to host membrane regions span residues Thr-185–Tyr-191 and Gly-270–Thr-277. N-linked (GlcNAc...) asparagine; by host glycans are attached at residues Asn-442 and Asn-484. The interval Ala-495–Ala-525 is disordered. Residues Gly-499–Arg-510 are compositionally biased toward basic residues. N-linked (GlcNAc...) asparagine; by host glycosylation is found at Asn-637 and Asn-703. Hydrophobic membrane proximal region stretches follow at residues Ile-748–Ala-801 and Val-781–Ala-801. Residues Phe-804–Tyr-824 traverse the membrane as a helical segment. Residues Arg-825 to Ala-928 lie on the Intravirion side of the membrane. Residues Tyr-876–Leu-879 carry the Golgi targeting motif. Residues Tyr-917–Leu-920 carry the Internalization motif motif.

It belongs to the herpesviridae glycoprotein B family. As to quaternary structure, homotrimer; disulfide-linked. Binds to heparan sulfate proteoglycans. Interacts with gH/gL heterodimer. A proteolytic cleavage by host furin generates two subunits that remain linked by disulfide bonds.

Its subcellular location is the virion membrane. The protein localises to the host cell membrane. It is found in the host endosome membrane. It localises to the host Golgi apparatus membrane. Functionally, envelope glycoprotein that forms spikes at the surface of virion envelope. Essential for the initial attachment to heparan sulfate moieties of the host cell surface proteoglycans. Involved in fusion of viral and cellular membranes leading to virus entry into the host cell. Following initial binding to its host receptors, membrane fusion is mediated by the fusion machinery composed at least of gB and the heterodimer gH/gL. May be involved in the fusion between the virion envelope and the outer nuclear membrane during virion egress. The chain is Envelope glycoprotein B from Bovine herpesvirus 1.1 (strain P8-2) (BoHV-1).